The following is a 391-amino-acid chain: Serine acetyltransferase 3, mitochondrial (391 aa).

Disordered stretches follow at residues lysine 40 to glutamate 82 and valine 353 to leucine 375. Residues serine 45–methionine 56 are compositionally biased toward pro residues.

It belongs to the transferase hexapeptide repeat family. Homomultimer. Interacts with OASC. Component of the cysteine synthase complex (CSC) composed of two OAS-TL dimers and one SAT hexamer. Ubiquitous with higher levels in leaves and siliques. Localized in vascular tissues, particularly in phloem.

The protein resides in the mitochondrion. The enzyme catalyses L-serine + acetyl-CoA = O-acetyl-L-serine + CoA. It participates in amino-acid biosynthesis; L-cysteine biosynthesis; L-cysteine from L-serine: step 1/2. The polypeptide is Serine acetyltransferase 3, mitochondrial (SAT3) (Arabidopsis thaliana (Mouse-ear cress)).